The sequence spans 1227 residues: DNA-directed RNA polymerase subunit beta' (1227 aa).

Zn(2+) is bound by residues cysteine 60, cysteine 62, cysteine 75, and cysteine 78. Mg(2+)-binding residues include aspartate 449, aspartate 451, and aspartate 453. Zn(2+) contacts are provided by cysteine 847, cysteine 921, cysteine 928, and cysteine 931.

The protein belongs to the RNA polymerase beta' chain family. In terms of assembly, the RNAP catalytic core consists of 2 alpha, 1 beta, 1 beta' and 1 omega subunit. When a sigma factor is associated with the core the holoenzyme is formed, which can initiate transcription. It depends on Mg(2+) as a cofactor. Zn(2+) serves as cofactor.

The enzyme catalyses RNA(n) + a ribonucleoside 5'-triphosphate = RNA(n+1) + diphosphate. Functionally, DNA-dependent RNA polymerase catalyzes the transcription of DNA into RNA using the four ribonucleoside triphosphates as substrates. The chain is DNA-directed RNA polymerase subunit beta' from Lysinibacillus sphaericus (strain C3-41).